The chain runs to 203 residues: V-type ATP synthase subunit D (203 aa).

This sequence belongs to the V-ATPase D subunit family.

Functionally, produces ATP from ADP in the presence of a proton gradient across the membrane. This Thermotoga neapolitana (strain ATCC 49049 / DSM 4359 / NBRC 107923 / NS-E) protein is V-type ATP synthase subunit D.